The sequence spans 299 residues: Formamidopyrimidine-DNA glycosylase (299 aa).

The active-site Schiff-base intermediate with DNA is the proline 2. Glutamate 3 (proton donor) is an active-site residue. Lysine 58 serves as the catalytic Proton donor; for beta-elimination activity. Positions 106, 125, and 168 each coordinate DNA. The FPG-type zinc-finger motif lies at 259–295 (RVYDRVGHACPTKGCTGRVGRIVQGGRSTFFCETCQV). Arginine 285 acts as the Proton donor; for delta-elimination activity in catalysis.

The protein belongs to the FPG family. In terms of assembly, monomer. The cofactor is Zn(2+).

It carries out the reaction Hydrolysis of DNA containing ring-opened 7-methylguanine residues, releasing 2,6-diamino-4-hydroxy-5-(N-methyl)formamidopyrimidine.. It catalyses the reaction 2'-deoxyribonucleotide-(2'-deoxyribose 5'-phosphate)-2'-deoxyribonucleotide-DNA = a 3'-end 2'-deoxyribonucleotide-(2,3-dehydro-2,3-deoxyribose 5'-phosphate)-DNA + a 5'-end 5'-phospho-2'-deoxyribonucleoside-DNA + H(+). Functionally, involved in base excision repair of DNA damaged by oxidation or by mutagenic agents. Acts as a DNA glycosylase that recognizes and removes damaged bases. Has a preference for oxidized purines, such as 7,8-dihydro-8-oxoguanine (8-oxoG). Has AP (apurinic/apyrimidinic) lyase activity and introduces nicks in the DNA strand. Cleaves the DNA backbone by beta-delta elimination to generate a single-strand break at the site of the removed base with both 3'- and 5'-phosphates. This is Formamidopyrimidine-DNA glycosylase from Methylorubrum extorquens (strain CM4 / NCIMB 13688) (Methylobacterium extorquens).